Reading from the N-terminus, the 400-residue chain is Argininosuccinate synthase (400 aa).

ATP is bound by residues 6 to 14 (AYSGGLDTS) and A33. L-citrulline is bound by residues Y84 and S89. Position 114 (G114) interacts with ATP. Residues T116, N120, and D121 each coordinate L-aspartate. N120 is a binding site for L-citrulline. L-citrulline-binding residues include R124, S173, S182, E258, and Y270.

Belongs to the argininosuccinate synthase family. Type 1 subfamily. In terms of assembly, homotetramer.

It is found in the cytoplasm. It carries out the reaction L-citrulline + L-aspartate + ATP = 2-(N(omega)-L-arginino)succinate + AMP + diphosphate + H(+). It participates in amino-acid biosynthesis; L-arginine biosynthesis; L-arginine from L-ornithine and carbamoyl phosphate: step 2/3. The sequence is that of Argininosuccinate synthase from Thermus thermophilus (strain ATCC BAA-163 / DSM 7039 / HB27).